A 256-amino-acid chain; its full sequence is Imidazole glycerol phosphate synthase subunit HisF (256 aa).

Catalysis depends on residues Asp-12 and Asp-131.

The protein belongs to the HisA/HisF family. In terms of assembly, heterodimer of HisH and HisF.

It localises to the cytoplasm. It carries out the reaction 5-[(5-phospho-1-deoxy-D-ribulos-1-ylimino)methylamino]-1-(5-phospho-beta-D-ribosyl)imidazole-4-carboxamide + L-glutamine = D-erythro-1-(imidazol-4-yl)glycerol 3-phosphate + 5-amino-1-(5-phospho-beta-D-ribosyl)imidazole-4-carboxamide + L-glutamate + H(+). The protein operates within amino-acid biosynthesis; L-histidine biosynthesis; L-histidine from 5-phospho-alpha-D-ribose 1-diphosphate: step 5/9. Functionally, IGPS catalyzes the conversion of PRFAR and glutamine to IGP, AICAR and glutamate. The HisF subunit catalyzes the cyclization activity that produces IGP and AICAR from PRFAR using the ammonia provided by the HisH subunit. This is Imidazole glycerol phosphate synthase subunit HisF from Pseudomonas paraeruginosa (strain DSM 24068 / PA7) (Pseudomonas aeruginosa (strain PA7)).